The following is a 591-amino-acid chain: A-type ATP synthase subunit A (591 aa).

233-240 (GPFGSGKT) contributes to the ATP binding site.

Belongs to the ATPase alpha/beta chains family. In terms of assembly, has multiple subunits with at least A(3), B(3), C, D, E, F, H, I and proteolipid K(x).

Its subcellular location is the cell membrane. The catalysed reaction is ATP + H2O + 4 H(+)(in) = ADP + phosphate + 5 H(+)(out). Component of the A-type ATP synthase that produces ATP from ADP in the presence of a proton gradient across the membrane. The A chain is the catalytic subunit. This Metallosphaera sedula (strain ATCC 51363 / DSM 5348 / JCM 9185 / NBRC 15509 / TH2) protein is A-type ATP synthase subunit A.